Consider the following 436-residue polypeptide: 3-ketoacyl-CoA thiolase (436 aa).

C99 (acyl-thioester intermediate) is an active-site residue. Residues H392 and C422 each act as proton acceptor in the active site.

This sequence belongs to the thiolase-like superfamily. Thiolase family. As to quaternary structure, heterotetramer of two alpha chains (FadJ) and two beta chains (FadI).

The protein resides in the cytoplasm. It catalyses the reaction an acyl-CoA + acetyl-CoA = a 3-oxoacyl-CoA + CoA. It participates in lipid metabolism; fatty acid beta-oxidation. Functionally, catalyzes the final step of fatty acid oxidation in which acetyl-CoA is released and the CoA ester of a fatty acid two carbons shorter is formed. In Escherichia coli (strain K12 / MC4100 / BW2952), this protein is 3-ketoacyl-CoA thiolase.